We begin with the raw amino-acid sequence, 474 residues long: P2X purinoceptor 2 (474 aa).

Residues 1 to 42 (MAATHPKAPTAQRLRQGWSAFWDYETPKVIVVRNRPLGVVYR) are Cytoplasmic-facing. A helical transmembrane segment spans residues 43 to 60 (AVQLLILLYFVWYVFIVQ). Over 61–333 (KSYQDSETGP…IVHGQAGKFS (273 aa)) the chain is Extracellular. Residues K77 and K79 each contribute to the ATP site. Disulfide bonds link C121–C172, C132–C155, and C138–C166. N129 is a glycosylation site (N-linked (GlcNAc...) asparagine). A glycan (N-linked (GlcNAc...) asparagine) is linked at N190. T192 contacts ATP. Residues C222 and C232 are joined by a disulfide bond. N247 carries N-linked (GlcNAc...) asparagine glycosylation. Cysteines 266 and 275 form a disulfide. ATP is bound by residues S292, N296, and R298. N306 carries N-linked (GlcNAc...) asparagine glycosylation. K315 serves as a coordination point for ATP. Residues 316–329 (AYGIRIDVIVHGQA) are pore-forming motif. The chain crosses the membrane as a helical span at residues 334-354 (LIPTIINLATALTSIGVGSFL). Over 355 to 474 (CDWILLTFMN…PTDPKGLAQL (120 aa)) the chain is Cytoplasmic. Positions 445–474 (PDRCVGQGLPSSESPLQDSTPTDPKGLAQL) are disordered. The segment covering 453–466 (LPSSESPLQDSTPT) has biased composition (polar residues).

The protein belongs to the P2X receptor family. Homotrimer and heterotrimer; functional P2XRs are organized as homomeric and heteromeric trimers. Homotrimer. Forms heterodimer with P2RX1. Forms heterotrimer with P2RX6. Forms heterotrimer with P2RX3. Express in organ of Corti.

It is found in the cell membrane. The enzyme catalyses Ca(2+)(in) = Ca(2+)(out). It catalyses the reaction K(+)(in) = K(+)(out). The catalysed reaction is Na(+)(in) = Na(+)(out). Fast activation by external ATP. Exhibits slow desensitization during prolonged ATP activation. Not sensitive to the ATP agonist:alpha/beta-methylene-ATP. Its function is as follows. ATP-gated nonselective transmembrane cation channel permeable to potassium, sodium and calcium. Activation by extracellular ATP induces a variety of cellular responses, such as excitatory postsynaptic responses in sensory neurons, neuromuscular junctions (NMJ) formation, hearing, perception of taste and peristalsis. In the inner ear, regulates sound transduction and auditory neurotransmission, outer hair cell electromotility, inner ear gap junctions, and K(+) recycling. Mediates synaptic transmission between neurons and from neurons to smooth muscle. The sequence is that of P2X purinoceptor 2 (P2RX2) from Cavia porcellus (Guinea pig).